Here is an 845-residue protein sequence, read N- to C-terminus: AdoMet-dependent rRNA methyltransferase SPB1 (845 aa).

Residues Gly-58, Trp-60, Asp-78, Asp-94, and Asp-119 each coordinate S-adenosyl-L-methionine. The Proton acceptor role is filled by Lys-159. Disordered regions lie at residues 223–247 and 279–298; these read GGGN…SQRQ and SLNK…DDDH. 2 coiled-coil regions span residues 366-402 and 464-502; these read TEEQ…KEII and DEEE…ERDA. A compositionally biased stretch (basic and acidic residues) spans 496-512; it reads RKAERDANYRAKQARGD. Disordered stretches follow at residues 496–546, 587–660, and 788–821; these read RKAE…DDDE, ENKT…HQQK, and KLNK…VKGK. Acidic residues-rich tracts occupy residues 513–528, 536–545, 610–624, and 633–648; these read ADDE…NDDV, MESESDDDDD, NEND…ESDF, and DDDD…DDEV. The stretch at 739-796 forms a coiled coil; it reads IKKVLEAQSRKKLRALKRLEKIKKKSDLINEDSGKSERDKADEISKLMKKLNKKQKQK. Over residues 788-797 the composition is skewed to basic residues; the sequence is KLNKKQKQKP.

This sequence belongs to the class I-like SAM-binding methyltransferase superfamily. RNA methyltransferase RlmE family. SPB1 subfamily. As to quaternary structure, component of the nucleolar and nucleoplasmic pre-60S ribosomal particle.

The protein resides in the nucleus. Its subcellular location is the nucleolus. The catalysed reaction is a ribonucleotide in rRNA + S-adenosyl-L-methionine = a 2'-O-methylribonucleotide in rRNA + S-adenosyl-L-homocysteine + H(+). Required for proper assembly of pre-ribosomal particles during the biogenesis of the 60S ribosomal subunit. The sequence is that of AdoMet-dependent rRNA methyltransferase SPB1 from Candida albicans (strain SC5314 / ATCC MYA-2876) (Yeast).